The primary structure comprises 251 residues: 3-deoxy-manno-octulosonate cytidylyltransferase (251 aa).

The protein belongs to the KdsB family.

It localises to the cytoplasm. It carries out the reaction 3-deoxy-alpha-D-manno-oct-2-ulosonate + CTP = CMP-3-deoxy-beta-D-manno-octulosonate + diphosphate. The protein operates within nucleotide-sugar biosynthesis; CMP-3-deoxy-D-manno-octulosonate biosynthesis; CMP-3-deoxy-D-manno-octulosonate from 3-deoxy-D-manno-octulosonate and CTP: step 1/1. Its pathway is bacterial outer membrane biogenesis; lipopolysaccharide biosynthesis. In terms of biological role, activates KDO (a required 8-carbon sugar) for incorporation into bacterial lipopolysaccharide in Gram-negative bacteria. In Rhizobium etli (strain CIAT 652), this protein is 3-deoxy-manno-octulosonate cytidylyltransferase.